The following is a 658-amino-acid chain: Translation factor GUF1, mitochondrial (658 aa).

The N-terminal 40 residues, 1 to 40 (MRGCLQTVRWLTSAWQRPRSYSPLSRAAPCRFFNVSIPRN), are a transit peptide targeting the mitochondrion. The tr-type G domain occupies 60–240 (DRFRNFCIVA…TVVEQIPAPV (181 aa)). GTP-binding positions include 69–76 (AHVDHGKS), 133–137 (DTPGH), and 187–190 (NKVD).

Belongs to the TRAFAC class translation factor GTPase superfamily. Classic translation factor GTPase family. LepA subfamily.

It localises to the mitochondrion inner membrane. It catalyses the reaction GTP + H2O = GDP + phosphate + H(+). Promotes mitochondrial protein synthesis. May act as a fidelity factor of the translation reaction, by catalyzing a one-codon backward translocation of tRNAs on improperly translocated ribosomes. Binds to mitochondrial ribosomes in a GTP-dependent manner. The chain is Translation factor GUF1, mitochondrial from Paracoccidioides lutzii (strain ATCC MYA-826 / Pb01) (Paracoccidioides brasiliensis).